The primary structure comprises 498 residues: ATP synthase subunit beta, chloroplastic (498 aa).

172-179 (GGAGVGKT) is a binding site for ATP.

The protein belongs to the ATPase alpha/beta chains family. As to quaternary structure, F-type ATPases have 2 components, CF(1) - the catalytic core - and CF(0) - the membrane proton channel. CF(1) has five subunits: alpha(3), beta(3), gamma(1), delta(1), epsilon(1). CF(0) has four main subunits: a(1), b(1), b'(1) and c(9-12).

The protein resides in the plastid. It localises to the chloroplast thylakoid membrane. It catalyses the reaction ATP + H2O + 4 H(+)(in) = ADP + phosphate + 5 H(+)(out). In terms of biological role, produces ATP from ADP in the presence of a proton gradient across the membrane. The catalytic sites are hosted primarily by the beta subunits. In Lemna minor (Common duckweed), this protein is ATP synthase subunit beta, chloroplastic.